The chain runs to 137 residues: Large ribosomal subunit protein uL16 (137 aa).

It belongs to the universal ribosomal protein uL16 family. As to quaternary structure, part of the 50S ribosomal subunit.

Binds 23S rRNA and is also seen to make contacts with the A and possibly P site tRNAs. The chain is Large ribosomal subunit protein uL16 from Coxiella burnetii (strain RSA 331 / Henzerling II).